A 210-amino-acid chain; its full sequence is 3-hexulose-6-phosphate synthase (210 aa).

This sequence belongs to the HPS/KGPDC family. HPS subfamily.

The catalysed reaction is D-ribulose 5-phosphate + formaldehyde = D-arabino-hex-3-ulose 6-phosphate. It participates in one-carbon metabolism; formaldehyde assimilation via RuMP pathway; D-fructose 6-phosphate from D-ribulose 5-phosphate and formaldehyde: step 1/2. In terms of biological role, catalyzes the condensation of ribulose 5-phosphate with formaldehyde to form 3-hexulose 6-phosphate. This chain is 3-hexulose-6-phosphate synthase, found in Staphylococcus aureus (strain USA300).